We begin with the raw amino-acid sequence, 232 residues long: Ubiquinone biosynthesis O-methyltransferase (232 aa).

S-adenosyl-L-methionine is bound by residues Arg36, Gly55, Asp76, and Leu120.

The protein belongs to the methyltransferase superfamily. UbiG/COQ3 family.

The enzyme catalyses a 3-demethylubiquinol + S-adenosyl-L-methionine = a ubiquinol + S-adenosyl-L-homocysteine + H(+). It catalyses the reaction a 3-(all-trans-polyprenyl)benzene-1,2-diol + S-adenosyl-L-methionine = a 2-methoxy-6-(all-trans-polyprenyl)phenol + S-adenosyl-L-homocysteine + H(+). Its pathway is cofactor biosynthesis; ubiquinone biosynthesis. Functionally, O-methyltransferase that catalyzes the 2 O-methylation steps in the ubiquinone biosynthetic pathway. This is Ubiquinone biosynthesis O-methyltransferase from Pseudomonas fluorescens (strain Pf0-1).